The primary structure comprises 422 residues: COUP transcription factor 1 (422 aa).

The tract at residues 1 to 80 (MAMVVSSWRD…QGPPGSGQSQ (80 aa)) is disordered. Residues 39 to 66 (EQQQAGSGAPHTPQTPGQPGAPATPGTQ) show a composition bias toward low complexity. The nuclear receptor DNA-binding region spans 82 to 157 (HIECVVCGDK…VGMRREAVQR (76 aa)). NR C4-type zinc fingers lie at residues 85 to 105 (CVVC…CEGC) and 121 to 145 (CRAN…LKKC). The 227-residue stretch at 183 to 409 (YLSGYISLLL…TLIRDMLLSG (227 aa)) folds into the NR LBD domain. Residues 343 to 422 (LQEKSQCALE…NWPYMSIQCS (80 aa)) form an important for dimerization region.

Belongs to the nuclear hormone receptor family. NR2 subfamily. In terms of assembly, binds DNA as dimer; homodimer and probable heterodimer with NR2F6. Interacts with GTF2B; this interaction is direct. Interacts with COPS2.

Its subcellular location is the nucleus. Functionally, coup (chicken ovalbumin upstream promoter) transcription factor binds to the ovalbumin promoter and, in conjunction with another protein (S300-II) stimulates initiation of transcription. Binds to both direct repeats and palindromes of the 5'-AGGTCA-3' motif. Represses transcriptional activity of LHCG. In Mus musculus (Mouse), this protein is COUP transcription factor 1 (Nr2f1).